The primary structure comprises 309 residues: Foldase protein PrsA 2 (309 aa).

The first 22 residues, 1 to 22 (MKQMNKLITGVVTLATVVTLSA), serve as a signal peptide directing secretion. The N-palmitoyl cysteine moiety is linked to residue Cys23. Residue Cys23 is the site of S-diacylglycerol cysteine attachment. One can recognise a PpiC domain in the interval 146–241 (TPTMTAEIMQ…RTYHIIKVTK (96 aa)).

Belongs to the PrsA family.

Its subcellular location is the cell membrane. It catalyses the reaction [protein]-peptidylproline (omega=180) = [protein]-peptidylproline (omega=0). Its function is as follows. Plays a major role in protein secretion by helping the post-translocational extracellular folding of several secreted proteins. The chain is Foldase protein PrsA 2 from Streptococcus pyogenes serotype M6 (strain ATCC BAA-946 / MGAS10394).